We begin with the raw amino-acid sequence, 191 residues long: Hypoxanthine/guanine phosphoribosyltransferase (191 aa).

This sequence belongs to the purine/pyrimidine phosphoribosyltransferase family. Archaeal HPRT subfamily. Homodimer.

It is found in the cytoplasm. It carries out the reaction IMP + diphosphate = hypoxanthine + 5-phospho-alpha-D-ribose 1-diphosphate. The catalysed reaction is GMP + diphosphate = guanine + 5-phospho-alpha-D-ribose 1-diphosphate. It functions in the pathway purine metabolism; IMP biosynthesis via salvage pathway; IMP from hypoxanthine: step 1/1. Functionally, catalyzes a salvage reaction resulting in the formation of IMP that is energically less costly than de novo synthesis. This is Hypoxanthine/guanine phosphoribosyltransferase from Methanocella paludicola (strain DSM 17711 / JCM 13418 / NBRC 101707 / SANAE).